The following is a 424-amino-acid chain: Histidine--tRNA ligase (424 aa).

The protein belongs to the class-II aminoacyl-tRNA synthetase family. Homodimer.

Its subcellular location is the cytoplasm. It carries out the reaction tRNA(His) + L-histidine + ATP = L-histidyl-tRNA(His) + AMP + diphosphate + H(+). In Escherichia coli (strain SE11), this protein is Histidine--tRNA ligase.